Reading from the N-terminus, the 433-residue chain is Xylose isomerase (433 aa).

Active-site residues include His97 and Asp100. Residues Glu228, Glu264, His267, Asp292, Asp303, Asp305, and Asp334 each contribute to the Mg(2+) site.

The protein belongs to the xylose isomerase family. In terms of assembly, homotetramer. It depends on Mg(2+) as a cofactor.

The protein resides in the cytoplasm. It catalyses the reaction alpha-D-xylose = alpha-D-xylulofuranose. This chain is Xylose isomerase, found in Fervidobacterium gondwanense.